The following is an 89-amino-acid chain: Neurotoxin beta-KTx 52.1 (89 aa).

Positions 1–20 (MKQYIFFLALIVLTATFAEA) are cleaved as a signal peptide. Positions 21–39 (GKKTEILDKVKKVFSKAKD) are excised as a propeptide. The BetaSPN-type CS-alpha/beta domain occupies 53–89 (ELGCPFIDKWCEDHCDSKKLVGKCENFDCSCVKLGGK). Cystine bridges form between Cys-56–Cys-76, Cys-63–Cys-81, and Cys-67–Cys-83.

This sequence belongs to the long chain scorpion toxin family. Class 2 subfamily. In terms of tissue distribution, expressed by the venom gland.

The protein resides in the secreted. Functionally, inhibits voltage-gated potassium channel. The chain is Neurotoxin beta-KTx 52.1 from Lychas mucronatus (Chinese swimming scorpion).